We begin with the raw amino-acid sequence, 644 residues long: Exoribonuclease 2 (644 aa).

An RNB domain is found at 189–516 (REDLTSLDFV…NHRLLKAVIK (328 aa)). Residues 561–643 (GTRFAAEIVD…ETRSIIARPV (83 aa)) enclose the S1 motif domain.

The protein belongs to the RNR ribonuclease family. RNase II subfamily.

It localises to the cytoplasm. The enzyme catalyses Exonucleolytic cleavage in the 3'- to 5'-direction to yield nucleoside 5'-phosphates.. In terms of biological role, involved in mRNA degradation. Hydrolyzes single-stranded polyribonucleotides processively in the 3' to 5' direction. In Shigella flexneri serotype 5b (strain 8401), this protein is Exoribonuclease 2.